We begin with the raw amino-acid sequence, 392 residues long: tRNA (guanine(26)-N(2)/guanine(27)-N(2))-dimethyltransferase (392 aa).

A Trm1 methyltransferase domain is found at 2–375 (EIVQEGIAKI…LSFEEVMKKM (374 aa)). Arg-36, Arg-66, Asp-84, Glu-113, and Ala-114 together coordinate S-adenosyl-L-methionine. Positions 247, 250, 266, and 269 each coordinate Zn(2+).

This sequence belongs to the class I-like SAM-binding methyltransferase superfamily. Trm1 family.

It catalyses the reaction guanosine(26)/guanosine(27) in tRNA + 4 S-adenosyl-L-methionine = N(2)-dimethylguanosine(26)/N(2)-dimethylguanosine(27) in tRNA + 4 S-adenosyl-L-homocysteine + 4 H(+). Functionally, dimethylates the guanine residues at position 26 and 27 of one or more tRNAs using S-adenosyl-L-methionine as donor of the methyl groups. The protein is tRNA (guanine(26)-N(2)/guanine(27)-N(2))-dimethyltransferase of Aquifex aeolicus (strain VF5).